We begin with the raw amino-acid sequence, 122 residues long: Large ribosomal subunit protein uL14 (122 aa).

This sequence belongs to the universal ribosomal protein uL14 family. In terms of assembly, part of the 50S ribosomal subunit. Forms a cluster with proteins L3 and L19. In the 70S ribosome, L14 and L19 interact and together make contacts with the 16S rRNA in bridges B5 and B8.

Functionally, binds to 23S rRNA. Forms part of two intersubunit bridges in the 70S ribosome. The protein is Large ribosomal subunit protein uL14 of Borreliella burgdorferi (strain ATCC 35210 / DSM 4680 / CIP 102532 / B31) (Borrelia burgdorferi).